The primary structure comprises 189 residues: MANLKLLLVGIGNPGPKYAYNRHNIGFVILDSLLNSSSASYQTNSKYSLARTDEEGVTIFYLKPLEFMNLSGKAVAEIAKKNGISPENILVIHDEIDFEFGKLKLKEGGGHAGHNGLRNIVEKLGTNTFFRLRFGVGKPSTASEVSDYVLSNFFPEEKEKIPELVQVSLQKIYDWVRERKNEFQKPSDI.

A tRNA-binding site is contributed by Tyr-18. Residue His-23 is the Proton acceptor of the active site. Residues Phe-67, Asn-69, and Asn-115 each contribute to the tRNA site.

Belongs to the PTH family. In terms of assembly, monomer.

It is found in the cytoplasm. The enzyme catalyses an N-acyl-L-alpha-aminoacyl-tRNA + H2O = an N-acyl-L-amino acid + a tRNA + H(+). Functionally, hydrolyzes ribosome-free peptidyl-tRNAs (with 1 or more amino acids incorporated), which drop off the ribosome during protein synthesis, or as a result of ribosome stalling. Catalyzes the release of premature peptidyl moieties from peptidyl-tRNA molecules trapped in stalled 50S ribosomal subunits, and thus maintains levels of free tRNAs and 50S ribosomes. The protein is Peptidyl-tRNA hydrolase of Leptospira borgpetersenii serovar Hardjo-bovis (strain JB197).